The sequence spans 314 residues: ATP synthase gamma chain (314 aa).

It belongs to the ATPase gamma chain family. F-type ATPases have 2 components, CF(1) - the catalytic core - and CF(0) - the membrane proton channel. CF(1) has five subunits: alpha(3), beta(3), gamma(1), delta(1), epsilon(1). CF(0) has three main subunits: a, b and c.

It is found in the cellular thylakoid membrane. Functionally, produces ATP from ADP in the presence of a proton gradient across the membrane. The gamma chain is believed to be important in regulating ATPase activity and the flow of protons through the CF(0) complex. The protein is ATP synthase gamma chain of Crocosphaera subtropica (strain ATCC 51142 / BH68) (Cyanothece sp. (strain ATCC 51142)).